Consider the following 427-residue polypeptide: Serine--tRNA ligase (427 aa).

Position 233–235 (233–235 (TAE)) interacts with L-serine. 264–266 (RSE) is an ATP binding site. L-serine is bound at residue Glu-287. Residue 351–354 (EISS) participates in ATP binding. Ser-387 serves as a coordination point for L-serine.

The protein belongs to the class-II aminoacyl-tRNA synthetase family. Type-1 seryl-tRNA synthetase subfamily. As to quaternary structure, homodimer. The tRNA molecule binds across the dimer.

The protein resides in the cytoplasm. It carries out the reaction tRNA(Ser) + L-serine + ATP = L-seryl-tRNA(Ser) + AMP + diphosphate + H(+). It catalyses the reaction tRNA(Sec) + L-serine + ATP = L-seryl-tRNA(Sec) + AMP + diphosphate + H(+). The protein operates within aminoacyl-tRNA biosynthesis; selenocysteinyl-tRNA(Sec) biosynthesis; L-seryl-tRNA(Sec) from L-serine and tRNA(Sec): step 1/1. Functionally, catalyzes the attachment of serine to tRNA(Ser). Is also able to aminoacylate tRNA(Sec) with serine, to form the misacylated tRNA L-seryl-tRNA(Sec), which will be further converted into selenocysteinyl-tRNA(Sec). This Buchnera aphidicola subsp. Schizaphis graminum (strain Sg) protein is Serine--tRNA ligase.